Reading from the N-terminus, the 103-residue chain is MGADDTLRVEPAVMQGFAASLDGAAEHLAVQLAELDAQVGQMLGGWRGASGSAYGSAWELWHRGAGEVQLGLSMLAAAIAHAGAGYQHNETASAQVLREVGGG.

It belongs to the WXG100 family. CFP-10 subfamily.

Its subcellular location is the secreted. This is ESAT-6-like protein EsxF from Mycobacterium tuberculosis (strain CDC 1551 / Oshkosh).